The chain runs to 434 residues: Adenylosuccinate synthetase (434 aa).

GTP is bound by residues 14 to 20 (GDEGKGK) and 42 to 44 (GHE). Asp-15 acts as the Proton acceptor in catalysis. Mg(2+) is bound by residues Asp-15 and Gly-42. IMP contacts are provided by residues 15 to 18 (DEGK), 40 to 43 (NSGH), Thr-133, Arg-147, Asn-229, Thr-244, and Arg-308. Residue His-43 is the Proton donor of the active site. 304 to 310 (VTTGRVR) serves as a coordination point for substrate. GTP-binding positions include Arg-310, 336 to 338 (KLD), and 422 to 424 (GTG).

Belongs to the adenylosuccinate synthetase family. In terms of assembly, homodimer. It depends on Mg(2+) as a cofactor.

It localises to the cytoplasm. The catalysed reaction is IMP + L-aspartate + GTP = N(6)-(1,2-dicarboxyethyl)-AMP + GDP + phosphate + 2 H(+). Its pathway is purine metabolism; AMP biosynthesis via de novo pathway; AMP from IMP: step 1/2. Functionally, plays an important role in the salvage pathway for purine nucleotide biosynthesis. Catalyzes the first committed step in the biosynthesis of AMP from IMP. The polypeptide is Adenylosuccinate synthetase (Theileria parva (East coast fever infection agent)).